A 177-amino-acid chain; its full sequence is MLDAFSRVVTNADAKAAYVGGADLQALKKFISEGNKRLDAVNSVVSNASCIVSDAVSGMICENPSLISPSGNCYTNRRMAACLRDGEIILRYVSYALLSGDSSVLEDRCLNGLKETYSSLGVPANSNARAVSIMKACAVAFINNTASQRKLSTPQGDCSGLASECASYFDKVTAAIS.

(2R,3E)-phycoerythrobilin is bound by residues cysteine 50 and cysteine 61. Asparagine 72 bears the N4-methylasparagine mark. (2R,3E)-phycoerythrobilin contacts are provided by cysteine 82 and cysteine 158.

Belongs to the phycobiliprotein family. Heterotetramer of one alpha-1, one alpha-2, and two beta chains. Contains three covalently linked bilin chromophores.

It is found in the plastid. Its subcellular location is the chloroplast thylakoid membrane. Light-harvesting photosynthetic bile pigment-protein from the phycobiliprotein complex. The sequence is that of B-phycoerythrin beta chain (cpeB) from Guillardia theta (Cryptophyte).